Here is an 808-residue protein sequence, read N- to C-terminus: Copal-8-ol diphosphate hydratase, chloroplastic (808 aa).

Residues 1–50 constitute a chloroplast transit peptide; sequence MAFTFTSAHLFLPVTENHSVHVNYSIPPGNWRLWSTAKGGSNKLDIRRLR. Residues 190-219 adopt a coiled-coil conformation; the sequence is DKCQKGLKFFRDNISKLEKENVEASAQMLS. Position 256 (lysine 256) interacts with substrate. 2 residues coordinate Mg(2+): aspartate 391 and aspartate 393. The short motif at 391–394 is the DXDD motif element; that stretch reads DLDD. Lysine 477 is a binding site for substrate.

This sequence belongs to the terpene synthase family. It depends on Mg(2+) as a cofactor. As to expression, expressed in stems, leaves and trichomes. Not detected in roots and seeds. Higher expression in young leaves than in fully expanded leaves.

Its subcellular location is the plastid. The protein localises to the chloroplast. The catalysed reaction is (2E,6E,10E)-geranylgeranyl diphosphate + H2O = 8-hydroxycopalyl diphosphate. Its pathway is secondary metabolite biosynthesis; terpenoid biosynthesis. Involved in the biosynthesis of oxygen-containing labdane-type diterpenes that may be implicated in direct and indirect defense mechanisms. No activity with geranyl diphosphate or farnesyl diphosphate as substrate. In Cistus creticus subsp. creticus (Rock rose), this protein is Copal-8-ol diphosphate hydratase, chloroplastic.